The sequence spans 258 residues: Ribosomal RNA small subunit methyltransferase J (258 aa).

Residues 106 to 107 (RD), 122 to 123 (ER), and aspartate 181 contribute to the S-adenosyl-L-methionine site.

Belongs to the methyltransferase superfamily. RsmJ family.

The protein resides in the cytoplasm. It catalyses the reaction guanosine(1516) in 16S rRNA + S-adenosyl-L-methionine = N(2)-methylguanosine(1516) in 16S rRNA + S-adenosyl-L-homocysteine + H(+). Functionally, specifically methylates the guanosine in position 1516 of 16S rRNA. The sequence is that of Ribosomal RNA small subunit methyltransferase J from Pseudoalteromonas atlantica (strain T6c / ATCC BAA-1087).